The chain runs to 576 residues: Putative pentatricopeptide repeat-containing protein At5g47460 (576 aa).

PPR repeat units follow at residues 20 to 53, 54 to 88, 89 to 119, 120 to 154, 155 to 189, 191 to 225, 226 to 252, 253 to 287, 288 to 318, 319 to 353, 354 to 384, 385 to 419, 421 to 452, and 458 to 488; these read SSNS…GEKP, DASP…GFVS, NTRL…MPDP, DVIS…DVFP, NEFS…GLEK, NVVV…DTVS, WNAI…MPNP, DTVT…NSSS, WNTI…GVRF, DEYS…GLDS, RVVV…MPRK, NLIV…RFLK, DRFT…MINE, and SVEH…FGFG. Positions 493–570 are type E motif; the sequence is AWRALLGACS…EVGSSWIDSR (78 aa).

The protein belongs to the PPR family. PCMP-E subfamily.

The polypeptide is Putative pentatricopeptide repeat-containing protein At5g47460 (PCMP-E103) (Arabidopsis thaliana (Mouse-ear cress)).